A 380-amino-acid chain; its full sequence is Cytochrome b (380 aa).

A run of 4 helical transmembrane segments spans residues 33-53 (FGSL…FLAM), 77-98 (WLIR…YMHI), 113-133 (WNIG…GYVL), and 178-198 (FFAF…LHLL). Heme b is bound by residues H83 and H97. Positions 182 and 196 each coordinate heme b. H201 provides a ligand contact to a ubiquinone. Transmembrane regions (helical) follow at residues 226 to 246 (YKDL…ALFA), 288 to 308 (LGGV…PILH), 320 to 340 (LTQF…WIGG), and 347 to 367 (FIII…VLSP).

It belongs to the cytochrome b family. The cytochrome bc1 complex contains 3 respiratory subunits (MT-CYB, CYC1 and UQCRFS1), 2 core proteins (UQCRC1 and UQCRC2) and probably 6 low-molecular weight proteins. It depends on heme b as a cofactor.

The protein localises to the mitochondrion inner membrane. Functionally, component of the ubiquinol-cytochrome c reductase complex (complex III or cytochrome b-c1 complex) that is part of the mitochondrial respiratory chain. The b-c1 complex mediates electron transfer from ubiquinol to cytochrome c. Contributes to the generation of a proton gradient across the mitochondrial membrane that is then used for ATP synthesis. This chain is Cytochrome b (mt-cyb), found in Oncorhynchus keta (Chum salmon).